A 292-amino-acid chain; its full sequence is MRGVIVPIVTPFKEDYSIDVPALEEHLDYLQKVGVHGIFINATTGEFTSLSKEERRFLAEKGRELVTSAFYLVGTASSNTLEVIELTKHAQDIGADYAVIAPPYYCPLTEEALFRHYSMIAEKTDIPIILYNIPACANSLSVPLVKRLTIEYPSIAGIKATLDSVNYIRDIILDVKGERKDFRVFTGLDQHFLNTLILGGDGGIMACANFAPELHLRLYKAFNEKRFEEAFEYSRKLAKLSKVYDIASSFGSAIKLAMRVRGFSIKPVLRPPYTMDGKEVEEKVRALLLEVL.

Residues threonine 43 and tyrosine 105 each act as charge relay system in the active site. Tyrosine 131 functions as the Proton donor in the catalytic mechanism. Lysine 159 serves as the catalytic Schiff-base intermediate with substrate.

Belongs to the DapA family. As to quaternary structure, homotetramer.

Its subcellular location is the cytoplasm. This is an uncharacterized protein from Thermococcus kodakarensis (strain ATCC BAA-918 / JCM 12380 / KOD1) (Pyrococcus kodakaraensis (strain KOD1)).